The following is a 328-amino-acid chain: L-asparaginase (328 aa).

The Asparaginase/glutaminase domain maps to Met-1–Asn-320. The active-site Nucleophile; O-isoaspartyl threonine intermediate is the Thr-11. Residues Thr-11, Asp-53, Ser-54, Thr-85, and Asp-86 each coordinate L-aspartate. Catalysis depends on charge relay system residues Thr-85, Asp-86, Lys-156, and Tyr-274.

Belongs to the asparaginase 1 family. Homodimer.

It catalyses the reaction L-asparagine + H2O = L-aspartate + NH4(+). With respect to regulation, chohan et al. found that divalent metal ions and EDTA do not have any significant effect on enzyme activity, indicating that activity is independent of metal ions. In another study, Hong et al. showed that activity is enhanced by Mg(2+), significantly inhibited by Co(2+) and Ni(2+), and moderately inhibited by Ca(2+), Cu(2+) and EDTA. Unfolding studies suggest that urea cannot induce complete unfolding and inactivation of the enzyme even at a concentration 8 M. However, in the presence of 4 M guanidine hydrochloride, the enzyme structure is unfolded with complete loss of enzyme activity. In terms of biological role, catalyzes the hydrolysis of L-asparagine into L-aspartate and ammonia. Also displays D-asparaginase activity, which is about 50% of the L-asparaginase activity. Does not exhibit glutaminase activity. This Thermococcus kodakarensis (strain ATCC BAA-918 / JCM 12380 / KOD1) (Pyrococcus kodakaraensis (strain KOD1)) protein is L-asparaginase.